A 308-amino-acid polypeptide reads, in one-letter code: Taste receptor type 2 member 107 (308 aa).

The Extracellular segment spans residues 1 to 7; that stretch reads MLSAAEG. The chain crosses the membrane as a helical span at residues 8 to 28; sequence ILLCVVTSEAVLGVLGDTFIA. Topologically, residues 29–43 are cytoplasmic; that stretch reads LANCMEYAKNKKLSK. The chain crosses the membrane as a helical span at residues 44 to 64; it reads IGFILIGLAISRIGVVWIIIL. Topologically, residues 65–94 are extracellular; sequence QGYMQVFFPHILTFGNITEYITYIWVFLNH. An N-linked (GlcNAc...) asparagine glycan is attached at Asn80. Residues 95–115 traverse the membrane as a helical segment; it reads LSVWFATNLNILYFLKIANFS. Over 116 to 127 the chain is Cytoplasmic; that stretch reads NSVFLWLKSRVR. Residues 128-148 traverse the membrane as a helical segment; it reads VVFIFLSGCLLTSWLLCFPQF. Residues 149–180 lie on the Extracellular side of the membrane; that stretch reads SKMLNNSKMYWGNTSWLQQQKNVFLINQSLTN. Asn153, Asn161, and Asn175 each carry an N-linked (GlcNAc...) asparagine glycan. The helical transmembrane segment at 181–201 threads the bilayer; it reads LGIFFFIIVSLITCFLLIVFL. Over 202-232 the chain is Cytoplasmic; it reads WRHIRQMHSDGSGLRDLNTEAHVKAMRVLIS. Residues 233–253 form a helical membrane-spanning segment; that stretch reads FAVLFILHFVGLSIQVLCFFL. Topologically, residues 254–258 are extracellular; the sequence is PQNNL. Residues 259–279 form a helical membrane-spanning segment; it reads LFITGLIATCLYPCGHSIILI. Over 280-308 the chain is Cytoplasmic; the sequence is LGNKQLKQASLKALQHLTCCETKRNLSVT.

It belongs to the G-protein coupled receptor T2R family.

It localises to the membrane. Functionally, putative taste receptor which may play a role in the perception of bitterness. In Rattus norvegicus (Rat), this protein is Taste receptor type 2 member 107.